The chain runs to 1298 residues: Histone-lysine N-methyltransferase EHMT1 (1298 aa).

Disordered stretches follow at residues 1 to 111 (MAAA…HVTA) and 144 to 192 (ASSL…RKLP). Ala2 carries the N-acetylalanine modification. A Glycyl lysine isopeptide (Lys-Gly) (interchain with G-Cter in SUMO1); alternate cross-link involves residue Lys22. A Glycyl lysine isopeptide (Lys-Gly) (interchain with G-Cter in SUMO2); alternate cross-link involves residue Lys22. Residues 38–50 (SAEKQAGEAHMAA) show a composition bias toward basic and acidic residues. Composition is skewed to polar residues over residues 54–67 (TNGSCENSDASSHA) and 76–89 (SARVNPQDGTNTLT). The span at 96 to 105 (VSERDSEAAK) shows a compositional bias: basic and acidic residues. Glycyl lysine isopeptide (Lys-Gly) (interchain with G-Cter in SUMO2) cross-links involve residues Lys190, Lys199, Lys231, Lys234, Lys317, and Lys327. Positions 211 to 234 (VVGLHAASKDPREVREARDHKEPK) are disordered. Residues 217 to 234 (ASKDPREVREARDHKEPK) are compositionally biased toward basic and acidic residues. The interval 339–479 (VNGESLEMDS…QTAPGDSTGY (141 aa)) is disordered. Acidic residues predominate over residues 344–360 (LEMDSDEDDSEELEEDD). Positions 373–393 (EDSRTSKESMSEADRAQKMDG) are enriched in basic and acidic residues. The segment covering 394–416 (ESEEEQESVDTGEEEEGGDESDL) has biased composition (acidic residues). Residue Lys432 forms a Glycyl lysine isopeptide (Lys-Gly) (interchain with G-Cter in SUMO2) linkage. Position 435 is a phosphoserine (Ser435). Residues 440-452 (PARKRRRRSRKKP) are compositionally biased toward basic residues. Residues 460–474 (SYKSSAGSAEQTAPG) are compositionally biased toward polar residues. Position 483 is a phosphoserine (Ser483). Residues Lys492, Lys559, Lys644, Lys659, Lys684, and Lys731 each participate in a glycyl lysine isopeptide (Lys-Gly) (interchain with G-Cter in SUMO2) cross-link. The disordered stretch occupies residues 644–717 (KADTTSTVTP…TPGLSQGPGK (74 aa)). ANK repeat units lie at residues 737–766 (FHPKQLYFSARQGELQKVLLMLVDGIDPNF), 772–801 (NKRSPLHAAAEAGHVDICHMLVQAGANIDT), 805–834 (DQRTPLMEAAENNHLEAVKYLIKAGALVDP), 838–868 (EGSTCLHLAAKKGHYEVVQYLLSNGQMDVNC), 872–901 (GGWTPMIWATEYKHVDLVKLLLSKGSDINI), 905–934 (EENICLHWAAFSGCVDIAEILLAAKCDLHA), 938–967 (HGDSPLHIAARENRYDCVVLFLSRDSDVTL), and 971–1004 (EGETPLQCASLNSQVWSALQMSKALQDSAPDRPS). Residues 905–907 (EEN) are histone H3K9me binding. 2 positions are modified to phosphoserine: Ser1004 and Ser1048. The 64-residue stretch at 1060–1123 (QYCVCIDDCS…NCRNRVVQNG (64 aa)) folds into the Pre-SET domain. Residues Cys1062, Cys1064, Cys1068, Cys1073, Cys1075, Cys1105, Cys1109, Cys1111, and Cys1115 each coordinate Zn(2+). Residues 1126-1243 (ARLQLYRTRD…AGEQLGFDYG (118 aa)) form the SET domain. S-adenosyl-L-methionine contacts are provided by residues 1136 to 1138 (MGW), Tyr1173, and 1200 to 1201 (NH). The segment at 1162–1181 (DSEADVREEDSYLFDLDNKD) is interaction with histone H3. Cys1203 is a binding site for Zn(2+). The interval 1242 to 1245 (YGER) is interaction with histone H3. Cys1256 is a Zn(2+) binding site. S-adenosyl-L-methionine is bound at residue Arg1257. Positions 1258 and 1263 each coordinate Zn(2+). Residues 1274–1298 (QASAAQEAQEDGLPDTSSAAAADPL) form a disordered region.

The protein belongs to the class V-like SAM-binding methyltransferase superfamily. As to quaternary structure, heterodimer; heterodimerizes with EHMT2. Interacts with WIZ and EHMT2. Part of the E2F6.com-1 complex in G0 phase composed of E2F6, MGA, MAX, TFDP1, CBX3, BAT8, EHMT1, RING1, RNF2, MBLR, L3MBTL2 and YAF2. Interacts (via ANK repeats) with RELA (when monomethylated at 'Lys-310'). Interacts with MPHOSPH8. Interacts with CDYL. Interacts with REST only in the presence of CDYL. Part of a complex containing at least CDYL, REST, WIZ, SETB1, EHMT1 and EHMT2. Interacts with BAZ2B. As to expression, widely expressed.

The protein localises to the nucleus. Its subcellular location is the chromosome. The catalysed reaction is N(6)-methyl-L-lysyl(9)-[histone H3] + S-adenosyl-L-methionine = N(6),N(6)-dimethyl-L-lysyl(9)-[histone H3] + S-adenosyl-L-homocysteine + H(+). The enzyme catalyses L-lysyl(9)-[histone H3] + S-adenosyl-L-methionine = N(6)-methyl-L-lysyl(9)-[histone H3] + S-adenosyl-L-homocysteine + H(+). With respect to regulation, methyltransferase activity is inhibited by BIX-01294. Efficiently inhibited by compound E72, a BIX-01294 derivative in which the diazepane ring and the benzyl are replaced with a 3-dimethylaminopropyl and a 5-aminopentyl group at sites B and C, respectively. Its function is as follows. Histone methyltransferase that specifically mono- and dimethylates 'Lys-9' of histone H3 (H3K9me1 and H3K9me2, respectively) in euchromatin. H3K9me represents a specific tag for epigenetic transcriptional repression by recruiting HP1 proteins to methylated histones. Also weakly methylates 'Lys-27' of histone H3 (H3K27me). Also required for DNA methylation, the histone methyltransferase activity is not required for DNA methylation, suggesting that these 2 activities function independently. Probably targeted to histone H3 by different DNA-binding proteins like E2F6, MGA, MAX and/or DP1. During G0 phase, it probably contributes to silencing of MYC- and E2F-responsive genes, suggesting a role in G0/G1 transition in cell cycle. In addition to the histone methyltransferase activity, also methylates non-histone proteins: mediates dimethylation of 'Lys-373' of p53/TP53. Represses the expression of mitochondrial function-related genes, perhaps by occupying their promoter regions, working in concert with probable chromatin reader BAZ2B. This chain is Histone-lysine N-methyltransferase EHMT1 (EHMT1), found in Homo sapiens (Human).